Here is a 149-residue protein sequence, read N- to C-terminus: SPbeta prophage-derived putative transcriptional regulator YosT (149 aa).

The sequence is that of SPbeta prophage-derived putative transcriptional regulator YosT (yosT) from Bacillus subtilis (strain 168).